Here is a 290-residue protein sequence, read N- to C-terminus: tRNA dimethylallyltransferase (290 aa).

11–18 lines the ATP pocket; sequence GPTASGKS. Residue 13–18 participates in substrate binding; it reads TASGKS. 2 interaction with substrate tRNA regions span residues 36–39 and 158–162; these read DSMQ and QRIVR.

The protein belongs to the IPP transferase family. Monomer. Requires Mg(2+) as cofactor.

The catalysed reaction is adenosine(37) in tRNA + dimethylallyl diphosphate = N(6)-dimethylallyladenosine(37) in tRNA + diphosphate. Catalyzes the transfer of a dimethylallyl group onto the adenine at position 37 in tRNAs that read codons beginning with uridine, leading to the formation of N6-(dimethylallyl)adenosine (i(6)A). The sequence is that of tRNA dimethylallyltransferase from Bartonella henselae (strain ATCC 49882 / DSM 28221 / CCUG 30454 / Houston 1) (Rochalimaea henselae).